Reading from the N-terminus, the 325-residue chain is Elongation factor P--(R)-beta-lysine ligase (325 aa).

76–78 (SPE) contacts substrate. Residues 100–102 (RNE) and Asn109 each bind ATP. Tyr118 is a substrate binding site. 244-245 (EL) is a binding site for ATP. Glu251 serves as a coordination point for substrate. Position 300 (Gly300) interacts with ATP.

It belongs to the class-II aminoacyl-tRNA synthetase family. EpmA subfamily. In terms of assembly, homodimer.

The catalysed reaction is D-beta-lysine + L-lysyl-[protein] + ATP = N(6)-((3R)-3,6-diaminohexanoyl)-L-lysyl-[protein] + AMP + diphosphate + H(+). Functionally, with EpmB is involved in the beta-lysylation step of the post-translational modification of translation elongation factor P (EF-P) on 'Lys-34'. Catalyzes the ATP-dependent activation of (R)-beta-lysine produced by EpmB, forming a lysyl-adenylate, from which the beta-lysyl moiety is then transferred to the epsilon-amino group of EF-P 'Lys-34'. The sequence is that of Elongation factor P--(R)-beta-lysine ligase from Salmonella gallinarum (strain 287/91 / NCTC 13346).